The following is a 91-amino-acid chain: Acylphosphatase (91 aa).

Positions 3 to 91 (TVTMRVTGLV…EKFTRFSVVY (89 aa)) constitute an Acylphosphatase-like domain. Catalysis depends on residues R18 and N36.

It belongs to the acylphosphatase family.

It carries out the reaction an acyl phosphate + H2O = a carboxylate + phosphate + H(+). The sequence is that of Acylphosphatase (acyP) from Lactobacillus johnsonii (strain CNCM I-12250 / La1 / NCC 533).